We begin with the raw amino-acid sequence, 717 residues long: Scinderin (717 aa).

The tract at residues 1–363 (MAPERHPPAF…DGFGKVYVTE (363 aa)) is actin-severing. A Gelsolin-like 1 repeat occupies 28–108 (ELVPVPPSRH…IQGYESNEFV (81 aa)). Residues 112-119 (KGGIKYKA) and 138-146 (RLLHIKGRR) contribute to the a 1,2-diacyl-sn-glycero-3-phospho-(1D-myo-inositol-4,5-bisphosphate) site. 5 Gelsolin-like repeats span residues 148–220 (VRAT…PDEL), 265–340 (VVAE…TPIF), 408–483 (RVPV…PHLL), 526–590 (AEVD…EEFW), and 628–703 (IEEV…PPTF). Positions 364 to 715 (RVAKIEQIEF…WFLAWDSNKW (352 aa)) are ca(2+)-dependent actin binding. Ca(2+) is bound by residues Asn-538, Asp-539, Glu-562, Asp-643, Asp-644, and Glu-666.

This sequence belongs to the villin/gelsolin family.

Its subcellular location is the cytoplasm. The protein localises to the cytoskeleton. It localises to the cell projection. The protein resides in the podosome. Its function is as follows. Ca(2+)-dependent actin filament-severing protein that has a regulatory function in exocytosis by affecting the organization of the microfilament network underneath the plasma membrane. In vitro, also has barbed end capping and nucleating activities in the presence of Ca(2+). Severing activity is inhibited by phosphatidylinositol 4,5-bis-phosphate (PIP2). Required for megakaryocyte differentiation, maturation, polyploidization and apoptosis with the release of platelet-like particles. Plays a role in osteoclastogenesis (OCG) and actin cytoskeletal organization in osteoclasts. Regulates chondrocyte proliferation and differentiation. Inhibits cell proliferation and tumorigenesis. Signaling is mediated by MAPK, p38 and JNK pathways. The chain is Scinderin (SCIN) from Gallus gallus (Chicken).